The sequence spans 154 residues: RING finger protein 11 (154 aa).

Over residues 1 to 12 the composition is skewed to polar residues; that stretch reads MGNCLKSPTSDD. Positions 1–53 are disordered; the sequence is MGNCLKSPTSDDISLLHESQSDRASFGEGTEPDQEPPPPYQEQVPVPVYHPTP. G2 carries N-myristoyl glycine lipidation. The S-palmitoyl cysteine moiety is linked to residue C4. 2 positions are modified to phosphoserine: S14 and S25. The PPxY motif motif lies at 37-40; that stretch reads PPPY. The segment covering 41–51 has biased composition (low complexity); sequence QEQVPVPVYHP. The RING-type zinc finger occupies 99-140; that stretch reads CVICMMDFVYGDPIRFLPCMHIYHLDCIDDWLMRSFTCPSCM. T135 carries the post-translational modification Phosphothreonine; by PKB/AKT1.

In terms of assembly, interacts (when phosphorylated) with 14-3-3. Interacts with the E3 ubiquitin-ligases NEDD4, ITCH, SMURF2 and WWP1. Also interacts with the E2 ubiquitin-conjugating enzymes UBE2D1 and UBE2N, but neither with CDC34, nor with UBE2L3. Interacts with ZNF350, EPS15 and STAMBP. After TNF stimulation, interacts with TAX1BP1, TNFAIP3 and RIPK1; these interactions are transient and they are lost after 1 hour of stimulation with TNF. Interacts with GGA1. In terms of processing, ubiquitinated in the presence of ITCH, SMURF2 and UBE2D1, as well as WWP1. Phosphorylation by PKB/AKT1 may accelerate degradation by the proteasome. Post-translationally, acylation at both Gly-2 and Cys-4 is required for proper localization to the endosomes.

The protein resides in the early endosome. The protein localises to the recycling endosome. It is found in the cytoplasm. It localises to the nucleus. Essential component of a ubiquitin-editing protein complex, comprising also TNFAIP3, ITCH and TAX1BP1, that ensures the transient nature of inflammatory signaling pathways. Promotes the association of TNFAIP3 to RIPK1 after TNF stimulation. TNFAIP3 deubiquitinates 'Lys-63' polyubiquitin chains on RIPK1 and catalyzes the formation of 'Lys-48'-polyubiquitin chains. This leads to RIPK1 proteasomal degradation and consequently termination of the TNF- or LPS-mediated activation of NF-kappa-B. Recruits STAMBP to the E3 ubiquitin-ligase SMURF2 for ubiquitination, leading to its degradation by the 26S proteasome. This Bos taurus (Bovine) protein is RING finger protein 11 (RNF11).